The chain runs to 167 residues: Crossover junction endodeoxyribonuclease RuvC (167 aa).

Active-site residues include aspartate 7, glutamate 67, and aspartate 140. Mg(2+)-binding residues include aspartate 7, glutamate 67, and aspartate 140.

Belongs to the RuvC family. Homodimer which binds Holliday junction (HJ) DNA. The HJ becomes 2-fold symmetrical on binding to RuvC with unstacked arms; it has a different conformation from HJ DNA in complex with RuvA. In the full resolvosome a probable DNA-RuvA(4)-RuvB(12)-RuvC(2) complex forms which resolves the HJ. Requires Mg(2+) as cofactor.

The protein resides in the cytoplasm. The catalysed reaction is Endonucleolytic cleavage at a junction such as a reciprocal single-stranded crossover between two homologous DNA duplexes (Holliday junction).. The RuvA-RuvB-RuvC complex processes Holliday junction (HJ) DNA during genetic recombination and DNA repair. Endonuclease that resolves HJ intermediates. Cleaves cruciform DNA by making single-stranded nicks across the HJ at symmetrical positions within the homologous arms, yielding a 5'-phosphate and a 3'-hydroxyl group; requires a central core of homology in the junction. The consensus cleavage sequence is 5'-(A/T)TT(C/G)-3'. Cleavage occurs on the 3'-side of the TT dinucleotide at the point of strand exchange. HJ branch migration catalyzed by RuvA-RuvB allows RuvC to scan DNA until it finds its consensus sequence, where it cleaves and resolves the cruciform DNA. This chain is Crossover junction endodeoxyribonuclease RuvC, found in Dehalococcoides mccartyi (strain ATCC BAA-2100 / JCM 16839 / KCTC 5957 / BAV1).